Reading from the N-terminus, the 224-residue chain is Urease accessory protein UreF 2 (224 aa).

This sequence belongs to the UreF family. UreD, UreF and UreG form a complex that acts as a GTP-hydrolysis-dependent molecular chaperone, activating the urease apoprotein by helping to assemble the nickel containing metallocenter of UreC. The UreE protein probably delivers the nickel.

It localises to the cytoplasm. Functionally, required for maturation of urease via the functional incorporation of the urease nickel metallocenter. This Pseudomonas syringae pv. tomato (strain ATCC BAA-871 / DC3000) protein is Urease accessory protein UreF 2.